We begin with the raw amino-acid sequence, 145 residues long: D-aminoacyl-tRNA deacylase (145 aa).

A Gly-cisPro motif, important for rejection of L-amino acids motif is present at residues 137–138; the sequence is GP.

It belongs to the DTD family. As to quaternary structure, homodimer.

It localises to the cytoplasm. It catalyses the reaction glycyl-tRNA(Ala) + H2O = tRNA(Ala) + glycine + H(+). It carries out the reaction a D-aminoacyl-tRNA + H2O = a tRNA + a D-alpha-amino acid + H(+). In terms of biological role, an aminoacyl-tRNA editing enzyme that deacylates mischarged D-aminoacyl-tRNAs. Also deacylates mischarged glycyl-tRNA(Ala), protecting cells against glycine mischarging by AlaRS. Acts via tRNA-based rather than protein-based catalysis; rejects L-amino acids rather than detecting D-amino acids in the active site. By recycling D-aminoacyl-tRNA to D-amino acids and free tRNA molecules, this enzyme counteracts the toxicity associated with the formation of D-aminoacyl-tRNA entities in vivo and helps enforce protein L-homochirality. This chain is D-aminoacyl-tRNA deacylase, found in Pseudomonas fluorescens (strain SBW25).